Consider the following 282-residue polypeptide: Elongation factor Ts (282 aa).

The segment at Thr80–Val83 is involved in Mg(2+) ion dislocation from EF-Tu.

The protein belongs to the EF-Ts family.

The protein resides in the cytoplasm. In terms of biological role, associates with the EF-Tu.GDP complex and induces the exchange of GDP to GTP. It remains bound to the aminoacyl-tRNA.EF-Tu.GTP complex up to the GTP hydrolysis stage on the ribosome. This chain is Elongation factor Ts, found in Aliivibrio salmonicida (strain LFI1238) (Vibrio salmonicida (strain LFI1238)).